The following is a 218-amino-acid chain: Antifreeze protein Maxi (218 aa).

The first 23 residues, 1–23 (MALSLFTVGQFIFLFWTISITEA), serve as a signal peptide directing secretion.

It belongs to the type-I AFP family. Homodimer. As to expression, detected in blood serum (at protein level). Detected in liver.

It is found in the secreted. Contributes to protect fish blood from freezing at subzero sea water temperatures. Lowers the blood freezing point by about 1.1 degrees at a concentration of 0.1 mg/ml, and by about 1.5 degrees at a concentration of 0.2 mg/ml. Binds to nascent ice crystals and prevents further growth. This chain is Antifreeze protein Maxi, found in Pseudopleuronectes americanus (Winter flounder).